The sequence spans 206 residues: Venom allergen 5 (206 aa).

4 cysteine pairs are disulfide-bonded: cysteine 4/cysteine 16, cysteine 8/cysteine 104, cysteine 28/cysteine 96, and cysteine 172/cysteine 189. An SCP domain is found at 48-191 (EEHNRFRQKV…MKIHYLICNY (144 aa)).

It belongs to the CRISP family. Venom allergen 5-like subfamily. In terms of tissue distribution, expressed by the venom gland.

Its subcellular location is the secreted. This is Venom allergen 5 from Polistes gallicus (Paper wasp).